The following is a 396-amino-acid chain: Elongation factor Tu 2 (396 aa).

Residues Lys10–Lys206 enclose the tr-type G domain. The tract at residues Gly19–Thr26 is G1. Position 19 to 26 (Gly19 to Thr26) interacts with GTP. Thr26 provides a ligand contact to Mg(2+). Positions Gly60–Ser64 are G2. A G3 region spans residues Asp81–Gly84. Residues Asp81 to His85 and Asn136 to Asp139 contribute to the GTP site. The G4 stretch occupies residues Asn136–Asp139. The segment at Ser174–Leu176 is G5.

Belongs to the TRAFAC class translation factor GTPase superfamily. Classic translation factor GTPase family. EF-Tu/EF-1A subfamily. Monomer.

It is found in the cytoplasm. The catalysed reaction is GTP + H2O = GDP + phosphate + H(+). Functionally, GTP hydrolase that promotes the GTP-dependent binding of aminoacyl-tRNA to the A-site of ribosomes during protein biosynthesis. In Ruthia magnifica subsp. Calyptogena magnifica, this protein is Elongation factor Tu 2.